A 152-amino-acid chain; its full sequence is Nucleoside diphosphate kinase B (152 aa).

The tract at residues 1 to 66 (MANLERTFIA…DRPFFPGLVK (66 aa)) is interaction with AKAP13. The ATP site is built by K12, F60, R88, T94, R105, and N115. The active-site Pros-phosphohistidine intermediate is the H118.

The protein belongs to the NDK family. Hexamer of two different chains: An and B (A6, A5B, A4B2, A3B3, A2B4, AB5, B6). Interacts with CAPN8. Interacts with AKAP13. Interacts with ITGB1BP1 (via C-terminal domain region). Interacts with BCL2L10. The cofactor is Mg(2+). Expressed in the base region of the oxyntic and pyloric mucosae.

The protein localises to the cytoplasm. Its subcellular location is the cell projection. It is found in the lamellipodium. It localises to the ruffle. The protein resides in the nucleus. It carries out the reaction a 2'-deoxyribonucleoside 5'-diphosphate + ATP = a 2'-deoxyribonucleoside 5'-triphosphate + ADP. The enzyme catalyses a ribonucleoside 5'-diphosphate + ATP = a ribonucleoside 5'-triphosphate + ADP. It catalyses the reaction ATP + protein L-histidine = ADP + protein N-phospho-L-histidine.. Its function is as follows. Major role in the synthesis of nucleoside triphosphates other than ATP. The ATP gamma phosphate is transferred to the NDP beta phosphate via a ping-pong mechanism, using a phosphorylated active-site intermediate. Negatively regulates Rho activity by interacting with AKAP13/LBC. Acts as a transcriptional activator of the MYC gene; binds DNA non-specifically. Binds to both single-stranded guanine- and cytosine-rich strands within the nuclease hypersensitive element (NHE) III(1) region of the MYC gene promoter. Does not bind to duplex NHE III(1). Has G-quadruplex (G4) DNA-binding activity, which is independent of its nucleotide-binding and kinase activity. Binds both folded and unfolded G4 with similar low nanomolar affinities. Stabilizes folded G4s regardless of whether they are prefolded or not. Exhibits histidine protein kinase activity. This Mus musculus (Mouse) protein is Nucleoside diphosphate kinase B (Nme2).